A 316-amino-acid polypeptide reads, in one-letter code: Serpentine receptor class gamma-4 (316 aa).

Helical transmembrane passes span 21–41 (FVYL…IWGT), 50–70 (SFFT…FLDV), 99–121 (IVYP…LSIN), 140–160 (MKKV…NVII), 188–208 (FQII…SITL), 229–249 (TAWI…FAFF), and 258–278 (IFYI…PIVM).

This sequence belongs to the nematode receptor-like protein srg family.

It is found in the membrane. This chain is Serpentine receptor class gamma-4 (srg-4), found in Caenorhabditis elegans.